The following is a 408-amino-acid chain: Centromere protein U (408 aa).

Basic residues predominate over residues 1 to 33 (DRPRPARLSHARFSKNHSGRTHSMKDKAGRKHR). A disordered region spans residues 1–218 (DRPRPARLSH…GKRKKPRSYT (218 aa)). Thr72 carries the post-translational modification Phosphothreonine; by PLK1. Thr92 bears the Phosphothreonine mark. Positions 94 to 103 (QEKEAKRSSD) are enriched in basic and acidic residues. Residue Ser102 is modified to Phosphoserine. Thr104 is modified (phosphothreonine). 3 positions are modified to phosphoserine: Ser105, Ser110, and Ser114. Positions 118-127 (SAKKPRRKLK) are enriched in basic residues. Residues Ser130, Ser133, and Ser135 each carry the phosphoserine modification. The segment covering 176–186 (PQKTGPQSAES) has biased composition (polar residues). Lys178 is covalently cross-linked (Glycyl lysine isopeptide (Lys-Gly) (interchain with G-Cter in SUMO2)). Phosphoserine occurs at positions 183 and 187. Thr192 carries the phosphothreonine modification. The residue at position 222 (Ser222) is a Phosphoserine. The stretch at 273-350 (SNLKEELIKM…LRKAAYFLSN (78 aa)) forms a coiled coil. Positions 293–310 (KRKNAKIISNIEKKRQRL) match the Nuclear localization signal motif.

It belongs to the CENP-U/AME1 family. As to quaternary structure, component of the CENPA-NAC complex, at least composed of CENPA, CENPC, CENPH, CENPM, CENPN, CENPT and CENPU. The CENPA-NAC complex interacts with the CENPA-CAD complex, composed of CENPI, CENPK, CENPL, CENPO, CENPP, CENPQ, CENPR and CENPS. Interacts with MLF1. In terms of processing, phosphorylated by PLK1 at Thr-72, creating a self-tethering site that specifically interacts with the polo-box domain of PLK1.

It is found in the cytoplasm. The protein localises to the nucleus. Its subcellular location is the chromosome. The protein resides in the centromere. It localises to the kinetochore. In terms of biological role, component of the CENPA-NAC (nucleosome-associated) complex, a complex that plays a central role in assembly of kinetochore proteins, mitotic progression and chromosome segregation. The CENPA-NAC complex recruits the CENPA-CAD (nucleosome distal) complex and may be involved in incorporation of newly synthesized CENPA into centromeres. Plays an important role in the correct PLK1 localization to the mitotic kinetochores. A scaffold protein responsible for the initial recruitment and maintenance of the kinetochore PLK1 population until its degradation. Involved in transcriptional repression. The protein is Centromere protein U (CENPU) of Bos taurus (Bovine).